The following is a 119-amino-acid chain: Large ribosomal subunit protein bL19 (119 aa).

Belongs to the bacterial ribosomal protein bL19 family.

Functionally, this protein is located at the 30S-50S ribosomal subunit interface and may play a role in the structure and function of the aminoacyl-tRNA binding site. This chain is Large ribosomal subunit protein bL19, found in Idiomarina loihiensis (strain ATCC BAA-735 / DSM 15497 / L2-TR).